Consider the following 388-residue polypeptide: Succinate--CoA ligase [ADP-forming] subunit beta (388 aa).

The ATP-grasp domain maps to 9-244 (KEILRKYGVT…LDEEDPAEIE (236 aa)). ATP contacts are provided by residues lysine 46, 53–55 (GRG), glutamate 99, alanine 102, and glutamate 107. Mg(2+) contacts are provided by asparagine 199 and aspartate 213. Substrate-binding positions include asparagine 264 and 321-323 (GIM).

Belongs to the succinate/malate CoA ligase beta subunit family. Heterotetramer of two alpha and two beta subunits. Requires Mg(2+) as cofactor.

The enzyme catalyses succinate + ATP + CoA = succinyl-CoA + ADP + phosphate. It carries out the reaction GTP + succinate + CoA = succinyl-CoA + GDP + phosphate. It functions in the pathway carbohydrate metabolism; tricarboxylic acid cycle; succinate from succinyl-CoA (ligase route): step 1/1. Its function is as follows. Succinyl-CoA synthetase functions in the citric acid cycle (TCA), coupling the hydrolysis of succinyl-CoA to the synthesis of either ATP or GTP and thus represents the only step of substrate-level phosphorylation in the TCA. The beta subunit provides nucleotide specificity of the enzyme and binds the substrate succinate, while the binding sites for coenzyme A and phosphate are found in the alpha subunit. This chain is Succinate--CoA ligase [ADP-forming] subunit beta, found in Herminiimonas arsenicoxydans.